The chain runs to 658 residues: CXXC-type zinc finger protein 1 (658 aa).

Methionine 1 is subject to N-acetylmethionine. Residues 1-14 (MEGDASDPEPPDAG) show a composition bias toward acidic residues. Positions 1–20 (MEGDASDPEPPDAGEDSKSE) are disordered. A phosphoserine mark is found at serine 6 and serine 19. The PHD-type zinc-finger motif lies at 28 to 76 (YCICRKPDINCFMIGCDNCNEWFHGDCIRITEKMAKAIREWYCRECREK). Positions 84–164 (YRHKKSRERD…HQQQQQQQQI (81 aa)) are disordered. Residues 90–120 (RERDSSERDGSEPRDEGGGRKRPAPDPDLQR) show a composition bias toward basic and acidic residues. A compositionally biased stretch (low complexity) spans 153–163 (QHHQQQQQQQQ). The segment at 162–211 (QQIKRSARMCGECEACRRTEDCGHCDFCRDMKKFGGPNKIRQKCRLRQCQ) adopts a CXXC-type zinc-finger fold. The Zn(2+) site is built by cysteine 171, cysteine 174, cysteine 177, cysteine 183, cysteine 186, cysteine 189, cysteine 205, and cysteine 210. 2 disordered regions span residues 221–285 (FPSS…SDED) and 327–373 (VKVK…DPAS). A Phosphoserine modification is found at serine 226. Residue threonine 229 is modified to Phosphothreonine. Residue lysine 252 forms a Glycyl lysine isopeptide (Lys-Gly) (interchain with G-Cter in SUMO2) linkage. Residues 327-336 (VKVKHVKRRE) show a composition bias toward basic residues. A compositionally biased stretch (basic and acidic residues) spans 337-347 (KKSEKKKDERY). Basic residues predominate over residues 348 to 360 (KRHRQKQKHKDKW). Over residues 361 to 370 (KHPERADAKD) the composition is skewed to basic and acidic residues. The stretch at 428 to 470 (GKKLLERIRREQQSARTRLQEMERRFHELEAIILRAKQQAVRE) forms a coiled coil.

In terms of assembly, component of the SET1 complex, at least composed of the catalytic subunit (SETD1A or SETD1B), WDR5, WDR82, RBBP5, ASH2L/ASH2, CXXC1/CFP1, HCFC1 and DPY30. Interacts with SETD1A. Interacts with ZNF335. Interacts with PRDM9; this interaction does not link PRDM9-activated recombination hotspot sites with DSB machinery and is not required for the hotspot recognition pathway. Interacts with histone H3K4me3. Post-translationally, may be regulated by proteolysis.

It localises to the nucleus speckle. The protein localises to the nucleus. Functionally, transcriptional activator that exhibits a unique DNA binding specificity for CpG unmethylated motifs with a preference for CpGG. This is CXXC-type zinc finger protein 1 (CXXC1) from Bos taurus (Bovine).